A 561-amino-acid chain; its full sequence is Alpha-1D adrenergic receptor (561 aa).

Residues 1–90 are Extracellular-facing; the sequence is MTFRDILSVT…VGGLVVSAQG (90 aa). Positions 10–71 are disordered; it reads TFEGPRSSSS…SSTGEPGAAA (62 aa). Gly residues predominate over residues 21-56; that stretch reads GGSGAGGGAGTVGPEGGAVGGVPGATGGGAVVGTGS. N-linked (GlcNAc...) asparagine glycosylation is found at Asn-60 and Asn-76. Residues 91–115 traverse the membrane as a helical segment; the sequence is VGVGVFLAAFILTAVAGNLLVILSV. Residues 116–127 lie on the Cytoplasmic side of the membrane; it reads ACNRHLQTVTNY. The helical transmembrane segment at 128-153 threads the bilayer; sequence FIVNLAVADLLLSAAVLPFSATMEVL. The Extracellular segment spans residues 154 to 163; sequence GFWAFGRTFC. Residues 164-186 traverse the membrane as a helical segment; that stretch reads DVWAAVDVLCCTASILSLCTISV. The Cytoplasmic segment spans residues 187–207; the sequence is DRYVGVRHSLKYPAIMTERKA. A helical transmembrane segment spans residues 208–232; that stretch reads AAILALLWAVALVVSVGPLLGWKEP. At 233-245 the chain is on the extracellular side; sequence VPPDERFCGITEE. The helical transmembrane segment at 246 to 269 threads the bilayer; sequence VGYAIFSSVCSFYLPMAVIVVMYC. Topologically, residues 270–342 are cytoplasmic; it reads RVYVVARSTT…KFSREKKAAK (73 aa). The helical transmembrane segment at 343–367 threads the bilayer; sequence TLAIVVGVFVLCWFPFFFVLPLGSL. The Extracellular portion of the chain corresponds to 368–374; it reads FPQLKPS. A helical transmembrane segment spans residues 375-399; the sequence is EGVFKVIFWLGYFNSCVNPLIYPCS. The Cytoplasmic segment spans residues 400 to 561; the sequence is SREFKRAFLR…DYSNLRETDI (162 aa). A lipid anchor (S-palmitoyl cysteine) is attached at Cys-413. Residues 452-481 form a disordered region; it reads APLALTAHPGAGSADTPETQDSVSSSRKPA. A compositionally biased stretch (polar residues) spans 467-479; it reads TPETQDSVSSSRK.

Belongs to the G-protein coupled receptor 1 family. Adrenergic receptor subfamily. ADRA1D sub-subfamily. In terms of assembly, interacts with FLNA (via filamin repeat 21); increases PKA-mediated phosphorylation of FLNA. Post-translationally, palmitoylated. Palmitoylation by ZDHHC21 may increase the expression of the receptor and regulate downstream signaling. Vas deferens, hippocampus, cerebral cortex, aorta, brain stem, heart and spleen.

It localises to the cell membrane. Functionally, this alpha-adrenergic receptor mediates its effect through the influx of extracellular calcium. In Rattus norvegicus (Rat), this protein is Alpha-1D adrenergic receptor (Adra1d).